The primary structure comprises 351 residues: Ubiquinol oxidase 4, chloroplastic/chromoplastic (351 aa).

A chloroplast and chromoplast-targeting transit peptide spans methionine 1–glutamine 56. The interval glutamate 71–serine 91 is disordered. A helical transmembrane segment spans residues phenylalanine 132–methionine 152. Residues glutamate 136, glutamate 175, and histidine 178 each coordinate Fe cation. A helical membrane pass occupies residues phenylalanine 195 to serine 215. Positions 227, 296, and 299 each coordinate Fe cation.

The protein belongs to the alternative oxidase family. It depends on Fe cation as a cofactor. Ubiquitous.

Its subcellular location is the plastid. The protein localises to the chloroplast thylakoid membrane. The protein resides in the chromoplast membrane. The enzyme catalyses 2 a ubiquinol + O2 = 2 a ubiquinone + 2 H2O. In terms of biological role, acts early in chloroplast biogenesis as a component of a redox chain responsible for phytoene desaturation. Prevents the generation of toxic oxygen radicals and photooxidation of the nascent photosynthetic apparatus. Involved in the differentiation of multiple plastid types, including chloroplasts, amyloplasts, and etioplasts. Might participate in the chloroplast respiratory chain. This is Ubiquinol oxidase 4, chloroplastic/chromoplastic (AOX4) from Arabidopsis thaliana (Mouse-ear cress).